An 87-amino-acid chain; its full sequence is Translation initiation factor IF-1 2 (87 aa).

An S1-like domain is found at 1-72 (MAKEELLELD…TKGRINFRHK (72 aa)).

The protein belongs to the IF-1 family. In terms of assembly, component of the 30S ribosomal translation pre-initiation complex which assembles on the 30S ribosome in the order IF-2 and IF-3, IF-1 and N-formylmethionyl-tRNA(fMet); mRNA recruitment can occur at any time during PIC assembly.

It is found in the cytoplasm. One of the essential components for the initiation of protein synthesis. Stabilizes the binding of IF-2 and IF-3 on the 30S subunit to which N-formylmethionyl-tRNA(fMet) subsequently binds. Helps modulate mRNA selection, yielding the 30S pre-initiation complex (PIC). Upon addition of the 50S ribosomal subunit IF-1, IF-2 and IF-3 are released leaving the mature 70S translation initiation complex. The sequence is that of Translation initiation factor IF-1 2 from Burkholderia vietnamiensis (strain G4 / LMG 22486) (Burkholderia cepacia (strain R1808)).